A 458-amino-acid chain; its full sequence is Transcription factor Atf1 (458 aa).

Residues 347 to 410 (EEKRRNFLER…VNLKTLLLAH (64 aa)) form the bZIP domain. Residues 349–378 (KRRNFLERNRVAALKCRQRKKQWLANLQNK) are basic motif. The leucine-zipper stretch occupies residues 389–403 (LTATVTQLREEIVNL).

This sequence belongs to the bZIP family.

Its subcellular location is the nucleus. Transcription factor that positively regulates vegetative growth, reproduction, and osmotic stress response. The chain is Transcription factor Atf1 from Penicillium expansum (Blue mold rot fungus).